Reading from the N-terminus, the 132-residue chain is Small ribosomal subunit protein uS8 (132 aa).

It belongs to the universal ribosomal protein uS8 family. As to quaternary structure, part of the 30S ribosomal subunit. Contacts proteins S5 and S12.

Its function is as follows. One of the primary rRNA binding proteins, it binds directly to 16S rRNA central domain where it helps coordinate assembly of the platform of the 30S subunit. This Levilactobacillus brevis (strain ATCC 367 / BCRC 12310 / CIP 105137 / JCM 1170 / LMG 11437 / NCIMB 947 / NCTC 947) (Lactobacillus brevis) protein is Small ribosomal subunit protein uS8.